We begin with the raw amino-acid sequence, 357 residues long: Fructose-1,6-bisphosphatase class 1 3 (357 aa).

Mg(2+) contacts are provided by E94, D116, L118, and D119. Residues 119 to 122 (DGSS) and N211 each bind substrate. A Mg(2+)-binding site is contributed by E283.

The protein belongs to the FBPase class 1 family. As to quaternary structure, homotetramer. Requires Mg(2+) as cofactor.

The protein localises to the cytoplasm. The enzyme catalyses beta-D-fructose 1,6-bisphosphate + H2O = beta-D-fructose 6-phosphate + phosphate. It participates in carbohydrate biosynthesis; Calvin cycle. The polypeptide is Fructose-1,6-bisphosphatase class 1 3 (Methylibium petroleiphilum (strain ATCC BAA-1232 / LMG 22953 / PM1)).